A 1060-amino-acid chain; its full sequence is MPKRTDIRKIMVIGSGPIVIGQAAEFDYSGTQACLSLKEEGYQVVLVNSNPATIMTDKDIADKVYIEPITLEFVTRILRKERPDALLPTLGGQTGLNMAMALSKNGILEELNVELLGTKLSAIDKAEDRDLFKQLMEELNQPIPESEIVNSVEEAIQFAEQIGYPLIVRPAFTLGGTGGGMCDNQEQLVDITTKGLKLSPVTQCLIERSIAGFKEIEYEVMRDAADNALVVCNMENFDPVGIHTGDSIVFAPAQTLSDVENQLLRDASLDIIRALKIEGGCNVQLALDPNSFKYYVIEVNPRVSRSSALASKATGYPIAKLAAKIAVGLTLDEVINPITKTTYAMFEPALDYVVAKMPRFPFDKFESGDRKLGTQMKATGEVMAIGRNIEESLLKACRSLEIGVDHIKIADLDNVSDDVLLEKIRKAEDDRLFYLAEALRRHYSIEKLASLTSIDSFFLDKLRVIVELEDLLSKNRLDINILKKVKNKGFSDKAIASLWQINEDQVRNMRKEAGILPVYKMVDTCASEFDSATPYFYSTYAVENESLISDKASILVLGSGPIRIGQGVEFDYATVHSVKAIRESGFEAIIMNSNPETVSTDFSISDKLYFEPLTFEDVMNVIDLEKPEGVILQFGGQTAINLAKDLNKAGVKILGTQLEDLDRAENRKQFEATLQALNIPQPPGFTATTEEEAVNAAQKIGYPVLVRPSYVLGGRAMKIVENEEDLRHYMTTAVKASPDHPVLIDAYLIGKECEVDAISDGQNILIPGIMEHIERAGVHSGDSMAVYPPQTLSETIIETIVDYTKRLAIGLNCIGMMNIQFVIKDQKVYVIEVNPRASRTLPFLSKVTHIPMAQVATKVILGDKLCNFTYGYDLYPASDMVHIKAPAFSFTKLAKVDSLLGPEMKSTGEVMGSDINLQKALYKAFEAAYLHMPDYGNIVFTVDDTDKEEALELAKVYQSIGYRIYATQGTAIYFDANGLETVLVGKLGENDRNHIPDLIKNGKIQAVINTVGQNNIDNHDALIIRRSAIEQGVPLFTSLDTAHAMFKVLESRAFTLKVLD.

The interval 1-401 (MPKRTDIRKI…SLLKACRSLE (401 aa)) is carboxyphosphate synthetic domain. The ATP site is built by arginine 129, arginine 169, glycine 175, glycine 176, arginine 208, isoleucine 210, glutamate 215, glycine 241, isoleucine 242, histidine 243, glutamine 284, and glutamate 298. The ATP-grasp 1 domain occupies 133 to 327 (KQLMEELNQP…IAKLAAKIAV (195 aa)). Glutamine 284, glutamate 298, and asparagine 300 together coordinate Mg(2+). Glutamine 284, glutamate 298, and asparagine 300 together coordinate Mn(2+). The interval 402 to 546 (IGVDHIKIAD…YSTYAVENES (145 aa)) is oligomerization domain. The tract at residues 547 to 929 (LISDKASILV…ALYKAFEAAY (383 aa)) is carbamoyl phosphate synthetic domain. The ATP-grasp 2 domain occupies 671–861 (EATLQALNIP…MAQVATKVIL (191 aa)). Positions 707, 746, 748, 752, 777, 778, 779, 780, 820, and 832 each coordinate ATP. Mg(2+)-binding residues include glutamine 820, glutamate 832, and asparagine 834. Mn(2+) is bound by residues glutamine 820, glutamate 832, and asparagine 834. In terms of domain architecture, MGS-like spans 930 to 1060 (LHMPDYGNIV…SRAFTLKVLD (131 aa)). The segment at 930–1060 (LHMPDYGNIV…SRAFTLKVLD (131 aa)) is allosteric domain.

It belongs to the CarB family. As to quaternary structure, composed of two chains; the small (or glutamine) chain promotes the hydrolysis of glutamine to ammonia, which is used by the large (or ammonia) chain to synthesize carbamoyl phosphate. Tetramer of heterodimers (alpha,beta)4. Mg(2+) serves as cofactor. The cofactor is Mn(2+).

It catalyses the reaction hydrogencarbonate + L-glutamine + 2 ATP + H2O = carbamoyl phosphate + L-glutamate + 2 ADP + phosphate + 2 H(+). It carries out the reaction hydrogencarbonate + NH4(+) + 2 ATP = carbamoyl phosphate + 2 ADP + phosphate + 2 H(+). Its pathway is amino-acid biosynthesis; L-arginine biosynthesis; carbamoyl phosphate from bicarbonate: step 1/1. It participates in pyrimidine metabolism; UMP biosynthesis via de novo pathway; (S)-dihydroorotate from bicarbonate: step 1/3. In terms of biological role, large subunit of the glutamine-dependent carbamoyl phosphate synthetase (CPSase). CPSase catalyzes the formation of carbamoyl phosphate from the ammonia moiety of glutamine, carbonate, and phosphate donated by ATP, constituting the first step of 2 biosynthetic pathways, one leading to arginine and/or urea and the other to pyrimidine nucleotides. The large subunit (synthetase) binds the substrates ammonia (free or transferred from glutamine from the small subunit), hydrogencarbonate and ATP and carries out an ATP-coupled ligase reaction, activating hydrogencarbonate by forming carboxy phosphate which reacts with ammonia to form carbamoyl phosphate. The chain is Carbamoyl phosphate synthase large chain from Streptococcus agalactiae serotype III (strain NEM316).